We begin with the raw amino-acid sequence, 146 residues long: Putative pre-16S rRNA nuclease (146 aa).

It belongs to the YqgF nuclease family.

It is found in the cytoplasm. Functionally, could be a nuclease involved in processing of the 5'-end of pre-16S rRNA. This is Putative pre-16S rRNA nuclease from Methylobacillus flagellatus (strain ATCC 51484 / DSM 6875 / VKM B-1610 / KT).